The chain runs to 644 residues: Macrolide export ATP-binding/permease protein MacB (644 aa).

The ABC transporter domain occupies Ile4 to Ala242. Gly40–Ser47 contacts ATP. 4 helical membrane passes run Leu270–Gly290, Ile524–Val544, Leu574–Phe594, and Ala607–Met627.

It belongs to the ABC transporter superfamily. Macrolide exporter (TC 3.A.1.122) family. As to quaternary structure, homodimer.

The protein resides in the cell inner membrane. Its function is as follows. Non-canonical ABC transporter that contains transmembrane domains (TMD), which form a pore in the inner membrane, and an ATP-binding domain (NBD), which is responsible for energy generation. Confers resistance against macrolides. This is Macrolide export ATP-binding/permease protein MacB from Neisseria meningitidis serogroup A / serotype 4A (strain DSM 15465 / Z2491).